Here is a 106-residue protein sequence, read N- to C-terminus: Translation initiation factor 1A 2 (106 aa).

A disordered region spans residues Met-1–Arg-24. Residues Thr-18–Thr-92 enclose the S1-like domain.

It belongs to the eIF-1A family.

In terms of biological role, seems to be required for maximal rate of protein biosynthesis. Enhances ribosome dissociation into subunits and stabilizes the binding of the initiator Met-tRNA(I) to 40 S ribosomal subunits. This chain is Translation initiation factor 1A 2 (eIF1A2), found in Methanosarcina mazei (strain ATCC BAA-159 / DSM 3647 / Goe1 / Go1 / JCM 11833 / OCM 88) (Methanosarcina frisia).